Consider the following 284-residue polypeptide: Prolyl 4-hydroxylase subunit alpha (284 aa).

Residues 169 to 284 (NFNSIKTQTQ…PRIAITTWIY (116 aa)) enclose the Fe2OG dioxygenase domain. Histidine 191, aspartate 193, and histidine 266 together coordinate Fe cation. Arginine 276 serves as a coordination point for 2-oxoglutarate.

It belongs to the P4HA family. In terms of assembly, heterotetramer of two alpha-1 chains and two beta chains (the beta chain is the multi-functional PDI). Fe(2+) serves as cofactor. It depends on L-ascorbate as a cofactor.

The protein localises to the cytoplasm. The enzyme catalyses L-prolyl-[Skp1 protein] + 2-oxoglutarate + O2 = trans-4-hydroxy-L-prolyl-[Skp1 protein] + succinate + CO2. Inhibited by the prolyl-hydroxylase inhibitors alpha,alpha'-dipyridyl and ethyl 3,4-dihydroxybenzoate. Catalyzes the post-translational formation of 4-hydroxyproline. Probably hydroxylates skp1 on Pro-143. The chain is Prolyl 4-hydroxylase subunit alpha (phyA) from Dictyostelium discoideum (Social amoeba).